The following is a 686-amino-acid chain: Eomesodermin homolog (686 aa).

A disordered region spans residues 27-46 (GGSGGSAGHLPSAAPSPQKL). Residues 34 to 43 (GHLPSAAPSP) are compositionally biased toward low complexity. Phosphoserine is present on Ser-107. A DNA-binding region (T-box) is located at residues 276–456 (LWLKFHRHQT…HNPFAKGFRD (181 aa)). The required for transcription activation stretch occupies residues 571–686 (AMAGWGGRGS…GGYYAFYTTP (116 aa)). The tract at residues 639 to 686 (ACKRRRLSPSNSSNENSPSIKCEDINAEEYSKDTSKGMGGYYAFYTTP) is disordered. Residues 646-657 (SPSNSSNENSPS) show a composition bias toward low complexity. Residues 659–673 (KCEDINAEEYSKDTS) are compositionally biased toward basic and acidic residues.

In terms of tissue distribution, expressed in CD8+ T-cells.

The protein localises to the nucleus. Functionally, functions as a transcriptional activator playing a crucial role during development. Functions in trophoblast differentiation and later in gastrulation, regulating both mesoderm delamination and endoderm specification. Plays a role in brain development being required for the specification and the proliferation of the intermediate progenitor cells and their progeny in the cerebral cortex. Required for differentiation and migration of unipolar dendritic brush cells. Also involved in the differentiation of CD8+ T-cells during immune response regulating the expression of lytic effector genes. This Homo sapiens (Human) protein is Eomesodermin homolog (EOMES).